Reading from the N-terminus, the 631-residue chain is Phosphomethylpyrimidine synthase (631 aa).

Substrate-binding positions include asparagine 239, methionine 268, tyrosine 297, histidine 333, 353–355 (SRG), 394–397 (DGLR), and glutamate 433. Zn(2+) is bound at residue histidine 437. Substrate is bound at residue tyrosine 460. Position 501 (histidine 501) interacts with Zn(2+). Positions 581, 584, and 589 each coordinate [4Fe-4S] cluster.

The protein belongs to the ThiC family. In terms of assembly, homodimer. [4Fe-4S] cluster is required as a cofactor.

It carries out the reaction 5-amino-1-(5-phospho-beta-D-ribosyl)imidazole + S-adenosyl-L-methionine = 4-amino-2-methyl-5-(phosphooxymethyl)pyrimidine + CO + 5'-deoxyadenosine + formate + L-methionine + 3 H(+). It functions in the pathway cofactor biosynthesis; thiamine diphosphate biosynthesis. Its function is as follows. Catalyzes the synthesis of the hydroxymethylpyrimidine phosphate (HMP-P) moiety of thiamine from aminoimidazole ribotide (AIR) in a radical S-adenosyl-L-methionine (SAM)-dependent reaction. The protein is Phosphomethylpyrimidine synthase of Ralstonia nicotianae (strain ATCC BAA-1114 / GMI1000) (Ralstonia solanacearum).